The sequence spans 674 residues: Probable L-type lectin-domain containing receptor kinase II.1 (674 aa).

A signal peptide spans Met-1–Ala-24. Residues Gln-25–Glu-301 lie on the Extracellular side of the membrane. The interval Asp-28 to Lys-274 is legume-lectin like. N-linked (GlcNAc...) asparagine glycosylation is found at Asn-57, Asn-117, Asn-133, Asn-185, Asn-210, and Asn-242. A helical membrane pass occupies residues Val-302–Tyr-322. At Lys-323 to Arg-674 the chain is on the cytoplasmic side. One can recognise a Protein kinase domain in the interval Phe-355–Ile-633. ATP is bound by residues Leu-361 to Val-369 and Lys-383. Asp-480 acts as the Proton acceptor in catalysis.

The protein in the C-terminal section; belongs to the protein kinase superfamily. Ser/Thr protein kinase family. This sequence in the N-terminal section; belongs to the leguminous lectin family.

It localises to the cell membrane. The catalysed reaction is L-seryl-[protein] + ATP = O-phospho-L-seryl-[protein] + ADP + H(+). It carries out the reaction L-threonyl-[protein] + ATP = O-phospho-L-threonyl-[protein] + ADP + H(+). In Arabidopsis thaliana (Mouse-ear cress), this protein is Probable L-type lectin-domain containing receptor kinase II.1 (LECRK21).